Reading from the N-terminus, the 412-residue chain is Probable tRNA pseudouridine synthase D (412 aa).

The Nucleophile role is filled by D97. Positions 167–370 (ALPNYYGYQR…YGGYRKVVLT (204 aa)) constitute a TRUD domain.

Belongs to the pseudouridine synthase TruD family.

The catalysed reaction is uridine(13) in tRNA = pseudouridine(13) in tRNA. Could be responsible for synthesis of pseudouridine from uracil-13 in transfer RNAs. The protein is Probable tRNA pseudouridine synthase D of Pyrobaculum islandicum (strain DSM 4184 / JCM 9189 / GEO3).